A 1330-amino-acid chain; its full sequence is ESX-3 secretion system protein EccC3 (1330 aa).

The next 2 membrane-spanning stretches (helical) occupy residues 43–63 and 65–85; these read LPYLIGILIVGMIVALVATGM and VISPQTLFFPFVLLLAATALY. 3 FtsK domains span residues 456–662, 811–1000, and 1090–1280; these read GEPL…SVSR, RDPL…RDSN, and LAPV…ADSG. ATP is bound by residues 479-486, 829-836, and 1107-1114; these read GMTGSGKS, GGPKSGKS, and GDARSGKT.

In terms of assembly, part of the ESX-3 / type VII secretion system (T7SS), which is composed of cytosolic and membrane components. The ESX-3 membrane complex is composed of EccB3, EccC3, EccD3 and EccE3.

It is found in the cell inner membrane. Part of the ESX-3 specialized secretion system, which is important for iron and zinc uptake or homeostasis. This is ESX-3 secretion system protein EccC3 from Mycobacterium tuberculosis (strain CDC 1551 / Oshkosh).